Reading from the N-terminus, the 97-residue chain is Non-pathogenic pore-forming peptide amoebapore A (97 aa).

The signal sequence occupies residues 1-20 (MKAIVFVLIFAVAFAVTLRQ). Residues 21-97 (GPIVCNLCTG…NAICAKIHAC (77 aa)) enclose the Saposin B-type domain. Cystine bridges form between Cys-25–Cys-97, Cys-28–Cys-91, and Cys-55–Cys-66.

As to quaternary structure, monomer. Homodimer. Hexamer; formed during insertion in the membrane.

Its subcellular location is the cytoplasmic granule. Its function is as follows. Forms pores in the cell membrane of host cells. Implicated in the cytolytic activity of the parasite. Pore forming activity is lower compared to the activity of ameobapore A from the pathogenic strain HM-1:IMSS. The polypeptide is Non-pathogenic pore-forming peptide amoebapore A (Entamoeba histolytica).